A 219-amino-acid chain; its full sequence is Uracil phosphoribosyltransferase 1 (219 aa).

GTP contacts are provided by residues Arg33, Arg42, and 76 to 79 (DGRI). Arg86 contributes to the 5-phospho-alpha-D-ribose 1-diphosphate binding site. Arg103 is a GTP binding site. A 5-phospho-alpha-D-ribose 1-diphosphate-binding site is contributed by Arg111. Arg132 is a binding site for GTP. 5-phospho-alpha-D-ribose 1-diphosphate contacts are provided by residues Asp138 and 138 to 146 (DPMLATGGS). Tyr202 is a D-ribose 5-phosphate binding site. Residues Ile203 and 208–210 (GDF) contribute to the uracil site. Asp209 is a 5-phospho-alpha-D-ribose 1-diphosphate binding site.

It belongs to the UPRTase family. Mg(2+) serves as cofactor.

The catalysed reaction is UMP + diphosphate = 5-phospho-alpha-D-ribose 1-diphosphate + uracil. It participates in pyrimidine metabolism; UMP biosynthesis via salvage pathway; UMP from uracil: step 1/1. Allosterically activated by GTP. Its function is as follows. Catalyzes the conversion of uracil and 5-phospho-alpha-D-ribose 1-diphosphate (PRPP) to UMP and diphosphate. This is Uracil phosphoribosyltransferase 1 from Schizosaccharomyces pombe (strain 972 / ATCC 24843) (Fission yeast).